A 140-amino-acid chain; its full sequence is Ribosome maturation factor RimP (140 aa).

This sequence belongs to the RimP family.

The protein resides in the cytoplasm. Its function is as follows. Required for maturation of 30S ribosomal subunits. This Campylobacter hominis (strain ATCC BAA-381 / DSM 21671 / CCUG 45161 / LMG 19568 / NCTC 13146 / CH001A) protein is Ribosome maturation factor RimP.